We begin with the raw amino-acid sequence, 98 residues long: HssA/B-like protein 36 (98 aa).

The interval 1–29 (MTLFSSISSISNPMTSSKSSISSFGSGTS) is disordered.

Belongs to the hssA/B family.

The chain is HssA/B-like protein 36 (hssl36) from Dictyostelium discoideum (Social amoeba).